The chain runs to 812 residues: Phospholipase D alpha 1 (812 aa).

Residues 1–130 (MAQILLHGTL…LGGEEIDKWL (130 aa)) enclose the C2 domain. Asp190 is a binding site for Ca(2+). In terms of domain architecture, PLD phosphodiesterase 1 spans 330 to 368 (TMFTHHQKIVVVDHEMPNQGSQQRRIVSFIGGIDLCDGR). Residues His335, Lys337, and Asp342 contribute to the active site. His335 serves as a coordination point for a 1,2-diacyl-sn-glycero-3-phosphate. The Ca(2+) site is built by His374 and His408. Residues Gln524 and His663 each coordinate a 1,2-diacyl-sn-glycero-3-phosphate. Residues 658–685 (FMIYVHTKMMIVDDEYIIIGSANINQRS) form the PLD phosphodiesterase 2 domain. Active-site residues include His663, Lys665, and Asp670. Glu724 serves as a coordination point for Ca(2+).

Belongs to the phospholipase D family. C2-PLD subfamily. Monomer. Ca(2+) serves as cofactor.

The enzyme catalyses a 1,2-diacyl-sn-glycero-3-phosphocholine + H2O = a 1,2-diacyl-sn-glycero-3-phosphate + choline + H(+). Its function is as follows. Hydrolyzes glycerol-phospholipids at the terminal phosphodiesteric bond. Plays an important role in various cellular processes. The sequence is that of Phospholipase D alpha 1 (PLD1) from Zea mays (Maize).